The sequence spans 59 residues: Ferredoxin (59 aa).

Residues 2-29 (KVSVDKDACIGCGVCASICPDVFEMDDD) enclose the 4Fe-4S ferredoxin-type domain. C10, C13, and C16 together coordinate [4Fe-4S] cluster. C20 and C43 are joined by a disulfide. C51 contacts [4Fe-4S] cluster.

[4Fe-4S] cluster serves as cofactor. It depends on [3Fe-4S] cluster as a cofactor.

Its function is as follows. Ferredoxins are iron-sulfur proteins that transfer electrons in a wide variety of metabolic reactions. This is Ferredoxin from Thermococcus litoralis.